We begin with the raw amino-acid sequence, 142 residues long: Hemoglobin subunit alpha (142 aa).

N-acetylserine is present on serine 1. A Globin domain is found at 1 to 142 (SLSEKNKAAV…VALALADRYR (142 aa)). Histidine 59 is a binding site for O2. Histidine 88 is a binding site for heme b.

This sequence belongs to the globin family. Heterotetramer of two alpha chains and two beta chains. As to expression, red blood cells.

Functionally, involved in oxygen transport from gills to the various peripheral tissues. The polypeptide is Hemoglobin subunit alpha (hba) (Pagothenia borchgrevinki (Bald rockcod)).